Consider the following 205-residue polypeptide: Peptidyl-tRNA hydrolase (205 aa).

Tyrosine 17 provides a ligand contact to tRNA. The active-site Proton acceptor is the histidine 22. TRNA is bound by residues tyrosine 73 and asparagine 75.

Belongs to the PTH family. Monomer.

The protein localises to the cytoplasm. It catalyses the reaction an N-acyl-L-alpha-aminoacyl-tRNA + H2O = an N-acyl-L-amino acid + a tRNA + H(+). Its function is as follows. Hydrolyzes ribosome-free peptidyl-tRNAs (with 1 or more amino acids incorporated), which drop off the ribosome during protein synthesis, or as a result of ribosome stalling. Functionally, catalyzes the release of premature peptidyl moieties from peptidyl-tRNA molecules trapped in stalled 50S ribosomal subunits, and thus maintains levels of free tRNAs and 50S ribosomes. This chain is Peptidyl-tRNA hydrolase, found in Maridesulfovibrio salexigens (strain ATCC 14822 / DSM 2638 / NCIMB 8403 / VKM B-1763) (Desulfovibrio salexigens).